We begin with the raw amino-acid sequence, 47 residues long: RECQSQSHRYKGACVHDTNCASVCQTEGFSGGKCVGFRGRCFCTKAC.

4 disulfide bridges follow: Cys-3–Cys-47, Cys-14–Cys-34, Cys-20–Cys-41, and Cys-24–Cys-43.

Functionally, has antifungal activity. Inhibits spore germination in F.graminearum (IC(50)=15 ug/ml), F.oxysporum (IC(50)=102 ug/ml), F.verticillioides (IC(50)=8.5 ug/ml) and D.maydis (IC(50)=12.5 ug/ml), but not in C.graminicola, B.cinerea and H.sativum at concentrations below 30 ug/ml. Inhibits hyphal development in P.infestans (IC(50)=25.5 ug/ml), but not release of zoospores. At concentrations above 100 ug/ml, induces morphological changes such as lysis of hyphae and sporangia in P.infestans. This is Defensin Ec-AMP-D1 from Echinochloa crus-galli (Barnyard grass).